The following is a 294-amino-acid chain: Diphthine synthase (294 aa).

Residues aspartate 93, valine 96, 121–122 (SG), leucine 173, and alanine 220 contribute to the S-adenosyl-L-methionine site.

This sequence belongs to the diphthine synthase family. Homodimer.

The enzyme catalyses 2-[(3S)-amino-3-carboxypropyl]-L-histidyl-[translation elongation factor 2] + 3 S-adenosyl-L-methionine = diphthine-[translation elongation factor 2] + 3 S-adenosyl-L-homocysteine + 3 H(+). Its pathway is protein modification; peptidyl-diphthamide biosynthesis. In terms of biological role, S-adenosyl-L-methionine-dependent methyltransferase that catalyzes the trimethylation of the amino group of the modified target histidine residue in translation elongation factor 2 (EF-2), to form an intermediate called diphthine. The three successive methylation reactions represent the second step of diphthamide biosynthesis. This Aeropyrum pernix (strain ATCC 700893 / DSM 11879 / JCM 9820 / NBRC 100138 / K1) protein is Diphthine synthase (dphB).